Here is a 209-residue protein sequence, read N- to C-terminus: Uracil phosphoribosyltransferase (209 aa).

Residues R79, R104, and 131–139 (DPMLATGGS) each bind 5-phospho-alpha-D-ribose 1-diphosphate. Uracil-binding positions include I194 and 199–201 (GDA). Residue D200 coordinates 5-phospho-alpha-D-ribose 1-diphosphate.

It belongs to the UPRTase family. It depends on Mg(2+) as a cofactor.

The catalysed reaction is UMP + diphosphate = 5-phospho-alpha-D-ribose 1-diphosphate + uracil. Its pathway is pyrimidine metabolism; UMP biosynthesis via salvage pathway; UMP from uracil: step 1/1. Its activity is regulated as follows. Allosterically activated by GTP. In terms of biological role, catalyzes the conversion of uracil and 5-phospho-alpha-D-ribose 1-diphosphate (PRPP) to UMP and diphosphate. The sequence is that of Uracil phosphoribosyltransferase from Streptococcus sanguinis (strain SK36).